The chain runs to 217 residues: Adenylate kinase (217 aa).

10 to 15 (GAGKGT) contacts ATP. Residues 30–59 (STGDMFRAAMKEETDLGLEAKSYIDKGELV) are NMP. Residues Thr-31, Arg-36, 57–59 (ELV), 85–88 (GFPR), and Gln-92 contribute to the AMP site. The LID stretch occupies residues 126–163 (GRRICKNCGATYHLVFNPPAKENVCDKCGGELYQREDD). Residue Arg-127 participates in ATP binding. 2 residues coordinate Zn(2+): Cys-130 and Cys-133. ATP is bound at residue 136 to 137 (TY). The Zn(2+) site is built by Cys-150 and Cys-153. Residues Arg-160 and Arg-171 each coordinate AMP. ATP is bound at residue Lys-199.

This sequence belongs to the adenylate kinase family. As to quaternary structure, monomer.

Its subcellular location is the cytoplasm. It catalyses the reaction AMP + ATP = 2 ADP. Its pathway is purine metabolism; AMP biosynthesis via salvage pathway; AMP from ADP: step 1/1. Its function is as follows. Catalyzes the reversible transfer of the terminal phosphate group between ATP and AMP. Plays an important role in cellular energy homeostasis and in adenine nucleotide metabolism. The chain is Adenylate kinase from Bacillus licheniformis (strain ATCC 14580 / DSM 13 / JCM 2505 / CCUG 7422 / NBRC 12200 / NCIMB 9375 / NCTC 10341 / NRRL NRS-1264 / Gibson 46).